We begin with the raw amino-acid sequence, 82 residues long: ATP synthase subunit c, chloroplastic (82 aa).

The next 2 helical transmembrane spans lie at 3-23 and 57-77; these read PLIAAASVVAAGLAVGLASIG and LAFMEALTIYGLVVALALLFA.

This sequence belongs to the ATPase C chain family. In terms of assembly, F-type ATPases have 2 components, F(1) - the catalytic core - and F(0) - the membrane proton channel. F(1) has five subunits: alpha(3), beta(3), gamma(1), delta(1), epsilon(1). F(0) has four main subunits: a(1), b(1), b'(1) and c(10-14). The alpha and beta chains form an alternating ring which encloses part of the gamma chain. F(1) is attached to F(0) by a central stalk formed by the gamma and epsilon chains, while a peripheral stalk is formed by the delta, b and b' chains.

It is found in the plastid. It localises to the chloroplast thylakoid membrane. Functionally, f(1)F(0) ATP synthase produces ATP from ADP in the presence of a proton or sodium gradient. F-type ATPases consist of two structural domains, F(1) containing the extramembraneous catalytic core and F(0) containing the membrane proton channel, linked together by a central stalk and a peripheral stalk. During catalysis, ATP synthesis in the catalytic domain of F(1) is coupled via a rotary mechanism of the central stalk subunits to proton translocation. In terms of biological role, key component of the F(0) channel; it plays a direct role in translocation across the membrane. A homomeric c-ring of between 10-14 subunits forms the central stalk rotor element with the F(1) delta and epsilon subunits. This chain is ATP synthase subunit c, chloroplastic, found in Nephroselmis olivacea (Green alga).